Here is a 356-residue protein sequence, read N- to C-terminus: Manganese-dependent ADP-ribose/CDP-alcohol diphosphatase (356 aa).

Residues aspartate 32, glutamine 34, aspartate 81, asparagine 117, histidine 253, histidine 290, and histidine 292 each coordinate Zn(2+).

This sequence belongs to the ADPRibase-Mn family. In terms of assembly, monomer. Mg(2+) serves as cofactor.

The catalysed reaction is CDP-choline + H2O = phosphocholine + CMP + 2 H(+). It catalyses the reaction ADP-D-ribose + H2O = D-ribose 5-phosphate + AMP + 2 H(+). It carries out the reaction CDP-glycerol + H2O = sn-glycerol 3-phosphate + CMP + 2 H(+). Functionally, hydrolyzes ADP-ribose, IDP-ribose, CDP-glycerol, CDP-choline and CDP-ethanolamine, but not other non-reducing ADP-sugars or CDP-glucose. This Xenopus laevis (African clawed frog) protein is Manganese-dependent ADP-ribose/CDP-alcohol diphosphatase (adprm).